Reading from the N-terminus, the 553-residue chain is 4-coumarate--CoA ligase (553 aa).

Positions 198, 199, 200, 201, 202, and 206 each coordinate ATP. Residues Tyr248 and Ser252 each coordinate (E)-4-coumaroyl-AMP. A CoA-binding site is contributed by Lys269. The segment at 271-340 (EIVPFLELIQ…AKFPNAKLGQ (70 aa)) is SBD1. (E)-4-coumaroyl-AMP is bound by residues Ala318, Gln340, Gly341, Thr345, and Met353. Residues Gln340, Gly341, and Thr345 each contribute to the ATP site. Positions 341 to 408 (GYGMTEAGPV…IRGDQIMKGY (68 aa)) are SBD2. Residues Asp429 and Arg444 each coordinate ATP. (E)-4-coumaroyl-AMP is bound by residues Lys446 and Lys450. Positions 452 and 453 each coordinate CoA. Lys535 lines the ATP pocket.

It belongs to the ATP-dependent AMP-binding enzyme family. The cofactor is Mg(2+).

The catalysed reaction is (E)-4-coumarate + ATP + CoA = (E)-4-coumaroyl-CoA + AMP + diphosphate. The enzyme catalyses (E)-4-coumarate + ATP + H(+) = (E)-4-coumaroyl-AMP + diphosphate. It catalyses the reaction (E)-4-coumaroyl-AMP + CoA = (E)-4-coumaroyl-CoA + AMP + H(+). It functions in the pathway phytoalexin biosynthesis; 3,4',5-trihydroxystilbene biosynthesis; 3,4',5-trihydroxystilbene from trans-4-coumarate: step 1/2. In terms of biological role, carboxylate--CoA ligase that may use 4-coumarate as substrate. Follows a two-step reaction mechanism, wherein the carboxylate substrate first undergoes adenylation by ATP, followed by a thioesterification in the presence of CoA to yield the final CoA thioester. This Vanilla planifolia (Vanilla) protein is 4-coumarate--CoA ligase.